Reading from the N-terminus, the 256-residue chain is Beta-fibrinogenase-like (256 aa).

A signal peptide spans 1–18; sequence MVLIKVLANLLVLQLSYA. Positions 19-24 are excised as a propeptide; it reads QKSSEL. One can recognise a Peptidase S1 domain in the interval 25 to 247; sequence VVGGDECNIN…YTDWIQSIIA (223 aa). 6 disulfides stabilise this stretch: Cys-31–Cys-161, Cys-49–Cys-65, Cys-96–Cys-254, Cys-140–Cys-208, Cys-172–Cys-187, and Cys-198–Cys-223. N-linked (GlcNAc...) asparagine glycosylation is present at Asn-44. The active-site Charge relay system is His-64. 2 N-linked (GlcNAc...) asparagine glycosylation sites follow: Asn-78 and Asn-101. Asp-108 acts as the Charge relay system in catalysis. The N-linked (GlcNAc...) asparagine glycan is linked to Asn-152. Ser-202 serves as the catalytic Charge relay system.

Belongs to the peptidase S1 family. Snake venom subfamily. In terms of assembly, monomer. Expressed by the venom gland.

It localises to the secreted. In terms of biological role, snake venom serine protease that has fibrinogenolytic activities by hydrolyzing the beta chain of fibrinogen (FGB). Typical arginine esterase which hydrolyzes esters and amides of arginine. In Daboia siamensis (Eastern Russel's viper), this protein is Beta-fibrinogenase-like.